The chain runs to 801 residues: tRNA(Met) cytidine acetyltransferase TmcA (801 aa).

Residues Gln-228, 256 to 265, and Arg-412 contribute to the ATP site; that span reads GRGKSSAVGL. The N-acetyltransferase domain occupies 457–637; sequence EELFLKNEEE…YTVIVVKPLS (181 aa). Acetyl-CoA is bound by residues 562-564, 569-575, and Glu-602; these read IAT and MGKGLGS.

It belongs to the RNA cytidine acetyltransferase family. TmcA subfamily.

The protein resides in the cytoplasm. It catalyses the reaction cytidine(34) in elongator tRNA(Met) + acetyl-CoA + ATP + H2O = N(4)-acetylcytidine(34) in elongator tRNA(Met) + ADP + phosphate + CoA + H(+). Functionally, catalyzes the formation of N(4)-acetylcytidine (ac(4)C) at the wobble position of tRNA(Met), by using acetyl-CoA as an acetyl donor and ATP (or GTP). This Thermofilum pendens (strain DSM 2475 / Hrk 5) protein is tRNA(Met) cytidine acetyltransferase TmcA.